The sequence spans 846 residues: MTSTANNNTSFYCNNNNSNNNININCCSNTGHNGNNTTETTLTTVNEERCAPTPTPTSTPPHGSALNIQNSNNGCNNIIGSSSNTLSTPSVQATPPTPPPSSSSLLVQPMIVTPSPVVATTSSLITNDDNLNSSTNYLMLPHQAQSSAMTIVQPPPPSTPLSSSSTVVPASTPPPSVMTPITTIQTTATPPSLQPTIHHQTALSFLGYTYNEQYQQNICQLYHQLNANGNGNGNGNGNHNNNNNNYNYNNNSFYQHQQHQHGLYYNQFPIPMNSSVPIIPTQQYIGTKQPQSQSQSQQLQPQPQPQPQLQPQLQSQPQSQQLKRKEASYHNNNNNNNNNNNNNNNNNNNNNNPYNRPTKKIMVSQGLPPISSSPSFQNLNNKYFDFNQPITRNNYNQVNYNNNNNNNNNNNNNYNNISNNNPCNNNNNNKPNNNPNNNNSNSNKTYINKQHRDYGYENNNNNNNKTFQQTSQQQQQQQQQIYKKQNCNNYIDESGDDESGEEYQNYQPYQQYQNFKQNNKDNNNNDDDDDDDDDEEEEEEEEDDNDNCNGNDSYDEENNNNNNNNNNNNQFKNESIIIGDNYYEIINDRIKSIKQKLHFLEKNSKFQWIREKSFNFINEFTGESVVNEELGIRGSKDFSYLKYKTLNPSLDNYITQERIELKNPLIKANIEKLKKDFNFEITKINTTKSESLEIMKSIQQLSTTVRSPLLDRSDLKAQRNHIHGFFTLIIAHQKCLSFDFIYQMRPQSMDHQHGFSNTFTDDFTNGGGCSISDKKNRRTLNDQYKSFISDYFKNHSDHPYPNEDEKIIISALIDLSKYQRNNWFSNKRSREKNQRIVNLKKQIGFH.

8 stretches are compositionally biased toward low complexity: residues 78–94 (IIGS…VQAT), 160–170 (PLSSSSTVVPA), 237–249 (GNHN…YNYN), 289–301 (QPQS…QLQP), 309–321 (LQPQ…QSQQ), 331–352 (NNNN…NNNN), 394–443 (NYNQ…SNSN), and 458–482 (NNNN…QQIY). Disordered regions lie at residues 78–103 (IIGS…PSSS), 151–177 (IVQP…PPSV), 230–249 (NGNG…YNYN), 286–374 (GTKQ…SSSP), 394–482 (NYNQ…QQIY), and 515–571 (FKQN…NNQF). Residues 524–546 (NNDDDDDDDDDEEEEEEEEDDND) show a composition bias toward acidic residues. Positions 553 to 604 (SYDEENNNNNNNNNNNNQFKNESIIIGDNYYEIINDRIKSIKQKLHFLEKNS) form a coiled coil. Residues 559 to 569 (NNNNNNNNNNN) are compositionally biased toward low complexity. A DNA-binding region (homeobox) is located at residues 773-835 (DKKNRRTLND…NKRSREKNQR (63 aa)).

It is found in the nucleus. In terms of biological role, putative transcription factor. In Dictyostelium discoideum (Social amoeba), this protein is Homeobox protein 12 (hbx12).